Reading from the N-terminus, the 349-residue chain is Protein-arginine kinase (349 aa).

The region spanning 24-252 (IVLSSRIRLA…SQIIEQERQA (229 aa)) is the Phosphagen kinase C-terminal domain. ATP-binding positions include 27–31 (SSRIR), histidine 89, arginine 123, 174–178 (RASVM), and 205–210 (RGIYGE). Positions 335–340 (RDIKRA) match the RDXXRA motif of the pArg binding pocket involved in allosteric regulation motif.

This sequence belongs to the ATP:guanido phosphotransferase family.

The enzyme catalyses L-arginyl-[protein] + ATP = N(omega)-phospho-L-arginyl-[protein] + ADP + H(+). Appears to be allosterically activated by the binding of pArg-containing polypeptides to the pArg-binding pocket localized in the C-terminal domain of McsB. In terms of biological role, catalyzes the specific phosphorylation of arginine residues in proteins. This chain is Protein-arginine kinase, found in Halothermothrix orenii (strain H 168 / OCM 544 / DSM 9562).